A 302-amino-acid polypeptide reads, in one-letter code: Oxygen-dependent coproporphyrinogen-III oxidase (302 aa).

Substrate is bound at residue Ser94. Residues His98 and His108 each coordinate a divalent metal cation. Residue His108 is the Proton donor of the active site. Position 110 to 112 (Asn110 to Arg112) interacts with substrate. Residues His147 and His177 each contribute to the a divalent metal cation site. The interval Tyr242–Glu277 is important for dimerization. Gly260 to Arg262 serves as a coordination point for substrate.

Belongs to the aerobic coproporphyrinogen-III oxidase family. Homodimer. A divalent metal cation is required as a cofactor.

Its subcellular location is the cytoplasm. It carries out the reaction coproporphyrinogen III + O2 + 2 H(+) = protoporphyrinogen IX + 2 CO2 + 2 H2O. The protein operates within porphyrin-containing compound metabolism; protoporphyrin-IX biosynthesis; protoporphyrinogen-IX from coproporphyrinogen-III (O2 route): step 1/1. Functionally, involved in the heme biosynthesis. Catalyzes the aerobic oxidative decarboxylation of propionate groups of rings A and B of coproporphyrinogen-III to yield the vinyl groups in protoporphyrinogen-IX. In Photorhabdus laumondii subsp. laumondii (strain DSM 15139 / CIP 105565 / TT01) (Photorhabdus luminescens subsp. laumondii), this protein is Oxygen-dependent coproporphyrinogen-III oxidase.